The sequence spans 238 residues: Probable transcriptional regulatory protein IL0164 (238 aa).

The protein belongs to the TACO1 family.

It localises to the cytoplasm. This is Probable transcriptional regulatory protein IL0164 from Idiomarina loihiensis (strain ATCC BAA-735 / DSM 15497 / L2-TR).